A 131-amino-acid polypeptide reads, in one-letter code: Small ribosomal subunit protein uS11 (131 aa).

The protein belongs to the universal ribosomal protein uS11 family. As to quaternary structure, part of the 30S ribosomal subunit. Interacts with proteins S7 and S18. Binds to IF-3.

Its function is as follows. Located on the platform of the 30S subunit, it bridges several disparate RNA helices of the 16S rRNA. Forms part of the Shine-Dalgarno cleft in the 70S ribosome. The polypeptide is Small ribosomal subunit protein uS11 (Granulibacter bethesdensis (strain ATCC BAA-1260 / CGDNIH1)).